A 393-amino-acid chain; its full sequence is Protein TsgA (393 aa).

The next 12 helical transmembrane spans lie at 11-31 (WISF…GMVM), 51-71 (FLNA…EIIP), 78-98 (FGFI…SLAL), 101-121 (AAMF…TFLI), 134-154 (LLFT…VAAF), 162-182 (WYWV…LTFG), 206-226 (IGVL…LGFI), 245-265 (ALVS…SFIL), 273-293 (ILTV…TGTQ), 298-318 (WFIL…ITLG), 332-352 (FILT…GPIV), and 361-381 (LLTA…LGFV).

The protein belongs to the major facilitator superfamily. TsgA family.

It is found in the cell inner membrane. The chain is Protein TsgA from Salmonella agona (strain SL483).